We begin with the raw amino-acid sequence, 439 residues long: Xaa-Pro dipeptidase (439 aa).

Mn(2+) contacts are provided by aspartate 244, aspartate 255, histidine 335, glutamate 380, and glutamate 419.

It belongs to the peptidase M24B family. Bacterial-type prolidase subfamily. Mn(2+) is required as a cofactor.

The catalysed reaction is Xaa-L-Pro dipeptide + H2O = an L-alpha-amino acid + L-proline. Splits dipeptides with a prolyl residue in the C-terminal position. In Shewanella amazonensis (strain ATCC BAA-1098 / SB2B), this protein is Xaa-Pro dipeptidase.